A 154-amino-acid polypeptide reads, in one-letter code: MPKGEGNVVAQNKKARHDYSIVDTIEAGIVLTGTEIKSVRAARIQLKDGYAQIKNGEAWLINVHIAPFEQGNIWNQDPERTRKLLLKKKQITKLQNDLKGTGMTLVPLKVYLKNGFAKVLLGIAKGKHDYDKRESIKRREQERDIKRIIKSVNR.

The protein belongs to the SmpB family.

The protein localises to the cytoplasm. Functionally, required for rescue of stalled ribosomes mediated by trans-translation. Binds to transfer-messenger RNA (tmRNA), required for stable association of tmRNA with ribosomes. tmRNA and SmpB together mimic tRNA shape, replacing the anticodon stem-loop with SmpB. tmRNA is encoded by the ssrA gene; the 2 termini fold to resemble tRNA(Ala) and it encodes a 'tag peptide', a short internal open reading frame. During trans-translation Ala-aminoacylated tmRNA acts like a tRNA, entering the A-site of stalled ribosomes, displacing the stalled mRNA. The ribosome then switches to translate the ORF on the tmRNA; the nascent peptide is terminated with the 'tag peptide' encoded by the tmRNA and targeted for degradation. The ribosome is freed to recommence translation, which seems to be the essential function of trans-translation. This chain is SsrA-binding protein, found in Streptococcus thermophilus (strain CNRZ 1066).